Reading from the N-terminus, the 709-residue chain is Nucleobase-ascorbate transporter 12 (709 aa).

The segment at 1–145 is disordered; sequence MSSSDPKPGP…GSGDPVRRPG (145 aa). Over residues 7 to 19 the composition is skewed to pro residues; it reads KPGPKPGPWPPTP. At serine 40 the chain carries Phosphoserine. Over residues 41-53 the composition is skewed to polar residues; sequence GETTATDSSSGQL. Composition is skewed to basic and acidic residues over residues 89–98 and 113–122; these read ETDKDKKEKP and QPVKRRRDSD. The next 12 membrane-spanning stretches (helical) occupy residues 190–210, 218–238, 240–260, 283–303, 308–328, 329–349, 361–381, 438–458, 530–550, 551–571, 585–605, and 639–659; these read YLSMLGSLILVPLVIVPAMGG, VVSTVLFVSGITTLLHTSFGS, LPLIQGPSFVFLAPALAIINS, IIIGSAFQAVLGYSGLMSLIL, PVVVAPTVAAVGLSFYSYGFP, LVGKCLEIGVVQILLVIIFAL, IFLIYAVPLSLAITWAAAFLL, WGVPLFNWKMAFVMCVVSVIA, GACVLVIFSLVGKVGGFLASI, PQVMVASLLCFMWAMFTALGL, IIIVGLSLFFSLSVPAYFQQY, and YVMNTLLSMSMVIAFIMAVIL.

This sequence belongs to the nucleobase:cation symporter-2 (NCS2) (TC 2.A.40) family. In terms of tissue distribution, ubiquitous.

The protein resides in the cell membrane. This chain is Nucleobase-ascorbate transporter 12 (NAT12), found in Arabidopsis thaliana (Mouse-ear cress).